The primary structure comprises 169 residues: Disulfide bond formation protein B 1 (169 aa).

Residues 1-14 are Cytoplasmic-facing; that stretch reads MSDNTLYLRREKRF. The chain crosses the membrane as a helical span at residues 15-31; sequence LVLLGIICLALIGGALY. Topologically, residues 32 to 49 are periplasmic; sequence MQIVLGEAPCPLCILQRY. Cysteine 41 and cysteine 44 are disulfide-bonded. The chain crosses the membrane as a helical span at residues 50-64; that stretch reads ALLFIAIFAFIGAAM. At 65-71 the chain is on the cytoplasmic side; it reads SGRRGVT. A helical membrane pass occupies residues 72-89; that stretch reads VCETLVTLSALGGIAAAG. Over 90 to 144 the chain is Periplasmic; that stretch reads RHVWILAHPSDSCGIDVLQPIVDGLPLATLFPTGFQVSGFCTTPYPPVLGLSLAQ. Cysteine 102 and cysteine 130 are disulfide-bonded. A helical transmembrane segment spans residues 145 to 163; it reads WALAAFVLTAVLVPACIIR. The Cytoplasmic segment spans residues 164–169; that stretch reads NRRKPY.

It belongs to the DsbB family.

Its subcellular location is the cell inner membrane. Functionally, required for disulfide bond formation in some periplasmic proteins. Acts by oxidizing the DsbA protein. This is Disulfide bond formation protein B 1 from Pseudomonas savastanoi pv. phaseolicola (strain 1448A / Race 6) (Pseudomonas syringae pv. phaseolicola (strain 1448A / Race 6)).